The sequence spans 189 residues: UPF0301 protein PFLU_5755 (189 aa).

Belongs to the UPF0301 (AlgH) family.

This is UPF0301 protein PFLU_5755 from Pseudomonas fluorescens (strain SBW25).